We begin with the raw amino-acid sequence, 112 residues long: Prothymosin alpha (112 aa).

Residue Met1 is modified to N-acetylmethionine. Residues 1 to 112 are disordered; the sequence is MSDAAVDTSS…KKQKKTDEDD (112 aa). An N-acetylserine; in Prothymosin alpha, N-terminally processed modification is found at Ser2. Residue Ser2 is modified to Phosphoserine. The residue at position 8 (Thr8) is a Phosphothreonine. Ser9 and Ser10 each carry phosphoserine. Thr13 and Thr14 each carry phosphothreonine. Basic and acidic residues predominate over residues 13–31; that stretch reads TTKDLKEKKEVVEEAENGR. Lys15 carries the N6-acetyllysine; alternate modification. Lys15 bears the N6-succinyllysine; alternate mark. Residues 43-84 show a composition bias toward acidic residues; the sequence is ENGEQEADNEVDEEEEEGGEEEEEEEEGDGEEEDGDEDEEAE. Positions 101-112 are enriched in basic and acidic residues; sequence ETKKQKKTDEDD. Thr102 bears the Phosphothreonine mark. Residue Lys103 is modified to N6-acetyllysine; alternate. Lys103 is covalently cross-linked (Glycyl lysine isopeptide (Lys-Gly) (interchain with G-Cter in SUMO2); alternate). Thr108 carries the post-translational modification Phosphothreonine.

Belongs to the pro/parathymosin family. In terms of assembly, interacts with NUPR1; regulates apoptotic process. Post-translationally, covalently linked to a small RNA of about 20 nucleotides.

The protein localises to the nucleus. Prothymosin alpha may mediate immune function by conferring resistance to certain opportunistic infections. The polypeptide is Prothymosin alpha (Ptma) (Rattus norvegicus (Rat)).